The chain runs to 45 residues: Cytochrome b559 subunit beta (45 aa).

A helical transmembrane segment spans residues 20 to 36; that stretch reads WLALHTLGVPTVFFLGA. His24 serves as a coordination point for heme.

This sequence belongs to the PsbE/PsbF family. In terms of assembly, heterodimer of an alpha subunit and a beta subunit. PSII is composed of 1 copy each of membrane proteins PsbA, PsbB, PsbC, PsbD, PsbE, PsbF, PsbH, PsbI, PsbJ, PsbK, PsbL, PsbM, PsbT, PsbX, PsbY, PsbZ, Psb30/Ycf12, peripheral proteins PsbO, CyanoQ (PsbQ), PsbU, PsbV and a large number of cofactors. It forms dimeric complexes. The cofactor is heme b.

It localises to the cellular thylakoid membrane. In terms of biological role, this b-type cytochrome is tightly associated with the reaction center of photosystem II (PSII). PSII is a light-driven water:plastoquinone oxidoreductase that uses light energy to abstract electrons from H(2)O, generating O(2) and a proton gradient subsequently used for ATP formation. It consists of a core antenna complex that captures photons, and an electron transfer chain that converts photonic excitation into a charge separation. In Parasynechococcus marenigrum (strain WH8102), this protein is Cytochrome b559 subunit beta.